The following is an 85-amino-acid chain: MAHKKAGSSSKNGRDSNPQYLGVKRYGGEDVNAGEIIVRQRGTKFHPGRNVGRGKDDTLFALSAGSVAFGQRRGRKVVDIVPAAE.

Residues 1–25 form a disordered region; the sequence is MAHKKAGSSSKNGRDSNPQYLGVKR. A compositionally biased stretch (polar residues) spans 7 to 19; the sequence is GSSSKNGRDSNPQ.

The protein belongs to the bacterial ribosomal protein bL27 family.

In Micrococcus luteus (strain ATCC 4698 / DSM 20030 / JCM 1464 / CCM 169 / CCUG 5858 / IAM 1056 / NBRC 3333 / NCIMB 9278 / NCTC 2665 / VKM Ac-2230) (Micrococcus lysodeikticus), this protein is Large ribosomal subunit protein bL27.